We begin with the raw amino-acid sequence, 107 residues long: MASGAARWLVLAPVRSGALRSGPSLRKDGDVSAAWSGSGRSLVPSRSVIVTRSGAILPKPVKMSFGLLRVFSIVIPFLYVGTLISKNFAALLEEHDIFVPEDDDDDD.

Residues 1–52 (MASGAARWLVLAPVRSGALRSGPSLRKDGDVSAAWSGSGRSLVPSRSVIVTR) constitute a mitochondrion transit peptide. The interaction with MAIP1 stretch occupies residues 1–52 (MASGAARWLVLAPVRSGALRSGPSLRKDGDVSAAWSGSGRSLVPSRSVIVTR). Topologically, residues 54–65 (GAILPKPVKMSF) are mitochondrial matrix. Residues 66 to 85 (GLLRVFSIVIPFLYVGTLIS) form a helical membrane-spanning segment. A GXXXX[G/A/S] motif is present at residues 81 to 85 (GTLIS). Over 86-107 (KNFAALLEEHDIFVPEDDDDDD) the chain is Mitochondrial intermembrane.

Belongs to the SMDT1/EMRE family. In terms of assembly, component of the uniplex complex, composed of MCU, EMRE/SMDT1, MICU1 and MICU2 (or MICU3) in a 4:4:1:1 stoichiometry. The number of EMRE/SMDT1 molecules is hovewer variable, ranging from 1 to 4 copies per uniplex complex, leading to uniplex complexes with distinct gatekeeping profiles. Interacts (via its C-terminal poly-Asp tail) with MCUR1; the interaction is direct. Unprocessed form interacts (via transit peptide) with MAIP1. Undergoes proteolytic degradation in neurons: degraded by AFG3L2 and SPG7 before SMDT1/EMRE assembly with the uniporter complex, limiting the availability of SMDT1/EMRE for MCU assembly and promoting efficient assembly of gatekeeper subunits with MCU.

The protein resides in the mitochondrion inner membrane. Its function is as follows. Essential regulatory subunit of the mitochondrial calcium uniporter complex (uniplex), a complex that mediates calcium uptake into mitochondria. Required to bridge the calcium-sensing proteins MICU1 with the calcium-conducting subunit MCU. Acts by mediating activation of MCU and retention of MICU1 to the MCU pore, in order to ensure tight regulation of the uniplex complex and appropriate responses to intracellular calcium signaling. In Homo sapiens (Human), this protein is Essential MCU regulator, mitochondrial.